The chain runs to 345 residues: tRNA dimethylallyltransferase (345 aa).

9–16 is a binding site for ATP; that stretch reads GPTASGKS. 11–16 serves as a coordination point for substrate; sequence TASGKS. 2 interaction with substrate tRNA regions span residues 34–37 and 195–199; these read DSMQ and QRMIR.

Belongs to the IPP transferase family. In terms of assembly, monomer. It depends on Mg(2+) as a cofactor.

The catalysed reaction is adenosine(37) in tRNA + dimethylallyl diphosphate = N(6)-dimethylallyladenosine(37) in tRNA + diphosphate. Functionally, catalyzes the transfer of a dimethylallyl group onto the adenine at position 37 in tRNAs that read codons beginning with uridine, leading to the formation of N6-(dimethylallyl)adenosine (i(6)A). The sequence is that of tRNA dimethylallyltransferase from Orientia tsutsugamushi (strain Boryong) (Rickettsia tsutsugamushi).